The following is a 233-amino-acid chain: Orotidine 5'-phosphate decarboxylase (233 aa).

Residues Asp-12, Lys-34, 61 to 70 (DWKLHDIGAT), Thr-116, Arg-181, Gln-190, Gly-210, and Arg-211 contribute to the substrate site. The active-site Proton donor is the Lys-63.

Belongs to the OMP decarboxylase family. Type 1 subfamily. In terms of assembly, homodimer.

The catalysed reaction is orotidine 5'-phosphate + H(+) = UMP + CO2. The protein operates within pyrimidine metabolism; UMP biosynthesis via de novo pathway; UMP from orotate: step 2/2. In terms of biological role, catalyzes the decarboxylation of orotidine 5'-monophosphate (OMP) to uridine 5'-monophosphate (UMP). This Caulobacter vibrioides (strain ATCC 19089 / CIP 103742 / CB 15) (Caulobacter crescentus) protein is Orotidine 5'-phosphate decarboxylase.